We begin with the raw amino-acid sequence, 103 residues long: Small ribosomal subunit protein uS10 (103 aa).

Belongs to the universal ribosomal protein uS10 family. In terms of assembly, part of the 30S ribosomal subunit.

In terms of biological role, involved in the binding of tRNA to the ribosomes. This is Small ribosomal subunit protein uS10 from Ruminiclostridium cellulolyticum (strain ATCC 35319 / DSM 5812 / JCM 6584 / H10) (Clostridium cellulolyticum).